The primary structure comprises 179 residues: Large ribosomal subunit protein uL10 (179 aa).

The protein belongs to the universal ribosomal protein uL10 family. In terms of assembly, part of the ribosomal stalk of the 50S ribosomal subunit. The N-terminus interacts with L11 and the large rRNA to form the base of the stalk. The C-terminus forms an elongated spine to which L12 dimers bind in a sequential fashion forming a multimeric L10(L12)X complex.

Functionally, forms part of the ribosomal stalk, playing a central role in the interaction of the ribosome with GTP-bound translation factors. This Mycolicibacterium vanbaalenii (strain DSM 7251 / JCM 13017 / BCRC 16820 / KCTC 9966 / NRRL B-24157 / PYR-1) (Mycobacterium vanbaalenii) protein is Large ribosomal subunit protein uL10.